Reading from the N-terminus, the 309-residue chain is MGINFDVSRPKARSSINMITKFHTIGLIGKPHHQGTNQTLKRLHHWLTMQGFEVLVEERVAAELGPNIEAVDLLEIGARCDLAIVVGGDGNMLGAARVLARFDLGVIGVNRGNLGFLTDLPPDAFEEALAKVLDGEFDTEHRFLLEAEVYRHGMLKASNTAVNEAVLHPGKIAHMIEFEVYIDDQFMYSQRADGMIVSTPTGSTAYALSAGGAILTPNLQALILVPMFPHTLSCRPIVVDACSTIKMVVSPDNGENLEVSCDGHVHLAVLPGDEIIVRRSSERLRLIHPKGHNYFHVLRTKLGWGSKLF.

Catalysis depends on aspartate 89, which acts as the Proton acceptor. NAD(+) contacts are provided by residues 89–90, 163–164, histidine 174, arginine 191, aspartate 193, and 204–209; these read DG, NE, and TAYALS.

Belongs to the NAD kinase family. A divalent metal cation is required as a cofactor.

It localises to the cytoplasm. It catalyses the reaction NAD(+) + ATP = ADP + NADP(+) + H(+). Involved in the regulation of the intracellular balance of NAD and NADP, and is a key enzyme in the biosynthesis of NADP. Catalyzes specifically the phosphorylation on 2'-hydroxyl of the adenosine moiety of NAD to yield NADP. In Shewanella baltica (strain OS185), this protein is NAD kinase.